Consider the following 85-residue polypeptide: U4-theraphotoxin-Hhn1m (85 aa).

An N-terminal signal peptide occupies residues 1-22 (MKVTLIAILTCAAVLVLHTTAA). Residues 23–48 (EELEAESQLVEVGMPDTELAAVDEER) constitute a propeptide that is removed on maturation. Intrachain disulfides connect C52-C66, C56-C77, and C71-C82.

It belongs to the neurotoxin 12 (Hwtx-2) family. 02 (Hwtx-2) subfamily. As to expression, expressed by the venom gland.

Its subcellular location is the secreted. Postsynaptic neurotoxin. The polypeptide is U4-theraphotoxin-Hhn1m (Cyriopagopus hainanus (Chinese bird spider)).